Here is a 750-residue protein sequence, read N- to C-terminus: Phosphate transporter PHO1 homolog 7 (750 aa).

In terms of domain architecture, SPX spans 1 to 298 (MKFGKDFVRQ…SRSAAKPYME (298 aa)). The Cytoplasmic portion of the chain corresponds to 1–350 (MKFGKDFVRQ…KVKKEKHRIT (350 aa)). A helical transmembrane segment spans residues 351–371 (FSTGFFVGCTVSLVVALVMFI). Topologically, residues 372–391 (HARNIMGAVGHKVYMETMFP) are extracellular. The helical transmembrane segment at 392–412 (LYSLFAFVVLHMIMYASNIYF) threads the bilayer. Topologically, residues 413–435 (WKRYRVNYPFIFGFKEGTELGYR) are cytoplasmic. A helical membrane pass occupies residues 436-456 (HVLLLSFGLGTLALCAVLINL). Residues 457 to 472 (DMEMDPNTNDYKTMTE) are Extracellular-facing. Residues 473–493 (LLPMFILALVVAILFCPFNIF) form a helical membrane-spanning segment. The Cytoplasmic segment spans residues 494–622 (YRSSRVFFLM…YSFNRGNIWK (129 aa)). The EXS domain maps to 557–750 (RSSDVYSTFY…NYNEEEDRDS (194 aa)). Residues 623–643 (ISAWVFSALATFYGTYWDIVF) traverse the membrane as a helical segment. At 644–666 (DWGLLHRPSKHLLREKLLVPHKA) the chain is on the extracellular side. A helical membrane pass occupies residues 667 to 687 (VYYVAIVLNIVLRMAWLQTVL). The Cytoplasmic portion of the chain corresponds to 688-750 (DFNLSFLHRE…NYNEEEDRDS (63 aa)).

Belongs to the SYG1 (TC 2.A.94) family. Expressed in root tips, vascular cylinders of roots and filaments, leaf hydathodes, stem, receptacle and stigma apex.

It is found in the cell membrane. Functionally, may transport inorganic phosphate (Pi). This is Phosphate transporter PHO1 homolog 7 (PHO1-H7) from Arabidopsis thaliana (Mouse-ear cress).